A 225-amino-acid polypeptide reads, in one-letter code: Small ribosomal subunit protein eS1 (225 aa).

The protein belongs to the eukaryotic ribosomal protein eS1 family.

The protein is Small ribosomal subunit protein eS1 of Methanococcus maripaludis (strain C6 / ATCC BAA-1332).